The sequence spans 464 residues: 3-isopropylmalate dehydratase large subunit (464 aa).

Positions 337, 397, and 400 each coordinate [4Fe-4S] cluster.

The protein belongs to the aconitase/IPM isomerase family. LeuC type 1 subfamily. Heterodimer of LeuC and LeuD. It depends on [4Fe-4S] cluster as a cofactor.

It carries out the reaction (2R,3S)-3-isopropylmalate = (2S)-2-isopropylmalate. It participates in amino-acid biosynthesis; L-leucine biosynthesis; L-leucine from 3-methyl-2-oxobutanoate: step 2/4. Catalyzes the isomerization between 2-isopropylmalate and 3-isopropylmalate, via the formation of 2-isopropylmaleate. The chain is 3-isopropylmalate dehydratase large subunit from Bacillus cereus (strain AH820).